A 343-amino-acid chain; its full sequence is Protein RecA (343 aa).

66-73 (GPESSGKT) contacts ATP.

This sequence belongs to the RecA family.

The protein resides in the cytoplasm. Its function is as follows. Can catalyze the hydrolysis of ATP in the presence of single-stranded DNA, the ATP-dependent uptake of single-stranded DNA by duplex DNA, and the ATP-dependent hybridization of homologous single-stranded DNAs. It interacts with LexA causing its activation and leading to its autocatalytic cleavage. The protein is Protein RecA of Rickettsia massiliae (strain Mtu5).